The primary structure comprises 60 residues: Colanic acid capsular biosynthesis activation protein B (60 aa).

This Klebsiella aerogenes (Enterobacter aerogenes) protein is Colanic acid capsular biosynthesis activation protein B (rcsB).